The primary structure comprises 288 residues: Undecaprenyl-diphosphatase (288 aa).

Transmembrane regions (helical) follow at residues G25–L45, F53–Y73, W93–L113, L121–I141, V171–V191, S196–L216, G231–I251, and F263–V283.

It belongs to the UppP family.

It is found in the cell membrane. The enzyme catalyses di-trans,octa-cis-undecaprenyl diphosphate + H2O = di-trans,octa-cis-undecaprenyl phosphate + phosphate + H(+). Functionally, catalyzes the dephosphorylation of undecaprenyl diphosphate (UPP). Confers resistance to bacitracin. The protein is Undecaprenyl-diphosphatase of Streptococcus thermophilus (strain ATCC BAA-250 / LMG 18311).